Consider the following 106-residue polypeptide: MIITTTPAIEGKNILEYKGVVFGEVISGVNFIKDFAAGLSNFFGGRSNTYEDELIGAREKAMKEMENRAIQMGANAVVGVDIDYEVLGSDNGMLMVTASGTAVYCE.

It belongs to the UPF0145 family.

In Clostridium botulinum (strain Alaska E43 / Type E3), this protein is UPF0145 protein CLH_2273.